The primary structure comprises 287 residues: MLLKGAPAADHILATIKENIRACSKAPGLAVVLIGNNPASEIYVNMKIKRATDLGMVSKSYRKPSDATLSDILALIHQLNNDENIHGILVQLPLPKHLDAQAILSTITPDKDVDGLHPVNVGKLLLGETDGFIPCTPAGIVELCKYYEIPLHGKHVVILGRSNIVGKPLAALLMQRHADTNASVTLLHSQSEHLTEITRTADILISAIGVPLFVNKEMIAEKTVIMDVGTSRIPAANPKGYILVGDVDFNNVVPVCRAITPVPGGVGPMTVAMLMRNTWESFLRHTS.

Residues 160 to 162 (GRS), S189, and T230 each bind NADP(+).

It belongs to the tetrahydrofolate dehydrogenase/cyclohydrolase family. As to quaternary structure, homodimer.

The catalysed reaction is (6R)-5,10-methylene-5,6,7,8-tetrahydrofolate + NADP(+) = (6R)-5,10-methenyltetrahydrofolate + NADPH. The enzyme catalyses (6R)-5,10-methenyltetrahydrofolate + H2O = (6R)-10-formyltetrahydrofolate + H(+). The protein operates within one-carbon metabolism; tetrahydrofolate interconversion. Its function is as follows. Catalyzes the oxidation of 5,10-methylenetetrahydrofolate to 5,10-methenyltetrahydrofolate and then the hydrolysis of 5,10-methenyltetrahydrofolate to 10-formyltetrahydrofolate. This Chlamydia trachomatis serovar D (strain ATCC VR-885 / DSM 19411 / UW-3/Cx) protein is Bifunctional protein FolD.